Reading from the N-terminus, the 366-residue chain is 3-dehydroquinate synthase (366 aa).

NAD(+)-binding positions include 71 to 76 (DGEQYK), 105 to 109 (GVIGD), 129 to 130 (TT), Lys-142, Lys-151, and 169 to 172 (CLKT). The Zn(2+) site is built by Glu-184, His-247, and His-264.

The protein belongs to the sugar phosphate cyclases superfamily. Dehydroquinate synthase family. Co(2+) is required as a cofactor. Requires Zn(2+) as cofactor. The cofactor is NAD(+).

It localises to the cytoplasm. It catalyses the reaction 7-phospho-2-dehydro-3-deoxy-D-arabino-heptonate = 3-dehydroquinate + phosphate. It participates in metabolic intermediate biosynthesis; chorismate biosynthesis; chorismate from D-erythrose 4-phosphate and phosphoenolpyruvate: step 2/7. In terms of biological role, catalyzes the conversion of 3-deoxy-D-arabino-heptulosonate 7-phosphate (DAHP) to dehydroquinate (DHQ). In Serratia proteamaculans (strain 568), this protein is 3-dehydroquinate synthase.